We begin with the raw amino-acid sequence, 218 residues long: Pyridoxine/pyridoxamine 5'-phosphate oxidase (218 aa).

Residues 14 to 17 and lysine 72 each bind substrate; that span reads RREY. Residues 67-72, 82-83, arginine 88, lysine 89, and glutamine 111 contribute to the FMN site; these read RIVLLK and YT. Substrate is bound by residues tyrosine 129, arginine 133, and serine 137. FMN contacts are provided by residues 146-147 and tryptophan 191; that span reads QS. 197–199 contributes to the substrate binding site; sequence RLH. Arginine 201 is an FMN binding site.

This sequence belongs to the pyridoxamine 5'-phosphate oxidase family. In terms of assembly, homodimer. Requires FMN as cofactor.

It catalyses the reaction pyridoxamine 5'-phosphate + O2 + H2O = pyridoxal 5'-phosphate + H2O2 + NH4(+). It carries out the reaction pyridoxine 5'-phosphate + O2 = pyridoxal 5'-phosphate + H2O2. It participates in cofactor metabolism; pyridoxal 5'-phosphate salvage; pyridoxal 5'-phosphate from pyridoxamine 5'-phosphate: step 1/1. Its pathway is cofactor metabolism; pyridoxal 5'-phosphate salvage; pyridoxal 5'-phosphate from pyridoxine 5'-phosphate: step 1/1. In terms of biological role, catalyzes the oxidation of either pyridoxine 5'-phosphate (PNP) or pyridoxamine 5'-phosphate (PMP) into pyridoxal 5'-phosphate (PLP). The polypeptide is Pyridoxine/pyridoxamine 5'-phosphate oxidase (Cronobacter sakazakii (strain ATCC BAA-894) (Enterobacter sakazakii)).